The chain runs to 422 residues: 5'-deoxyadenosine deaminase (422 aa).

Zn(2+) is bound by residues His57 and His59. The substrate site is built by Glu86 and His178. Position 205 (His205) interacts with Zn(2+). Positions 208 and 294 each coordinate substrate. Asp294 serves as a coordination point for Zn(2+).

The protein belongs to the metallo-dependent hydrolases superfamily. MTA/SAH deaminase family. As to quaternary structure, homotetramer. Zn(2+) serves as cofactor.

The enzyme catalyses 5'-deoxyadenosine + H2O + H(+) = 5'-deoxyinosine + NH4(+). It carries out the reaction S-adenosyl-L-homocysteine + H2O + H(+) = S-inosyl-L-homocysteine + NH4(+). The catalysed reaction is S-methyl-5'-thioadenosine + H2O + H(+) = S-methyl-5'-thioinosine + NH4(+). It catalyses the reaction adenosine + H2O + H(+) = inosine + NH4(+). Its pathway is amino-acid biosynthesis; S-adenosyl-L-methionine biosynthesis. In terms of biological role, catalyzes the deamination of three SAM-derived enzymatic products, namely 5'-deoxyadenosine, S-adenosyl-L-homocysteine, and 5'-methylthioadenosine, to produce the inosine analogs. Can also deaminate adenosine. The preferred substrate for this enzyme is 5'-deoxyadenosine, but all these substrates are efficiently deaminated. Likely functions in a S-adenosyl-L-methionine (SAM) recycling pathway from S-adenosyl-L-homocysteine (SAH) produced from SAM-dependent methylation reactions. May also be involved in the recycling of 5'-deoxyadenosine, whereupon the 5'-deoxyribose moiety of 5'-deoxyinosine is further metabolized to deoxyhexoses used for the biosynthesis of aromatic amino acids in methanogens. This Methanococcus maripaludis (strain C7 / ATCC BAA-1331) protein is 5'-deoxyadenosine deaminase.